The sequence spans 663 residues: DNA topoisomerase 4 subunit B (663 aa).

ATP contacts are provided by residues Tyr7, Asn47, Asp74, 114–120 (GLHGVGA), and Lys341. The interval 386-416 (REAARKAREDARSGKKNKRKDTLLSGKLTPA) is disordered. Residues 387 to 398 (EAARKAREDARS) show a composition bias toward basic and acidic residues. Residues 424–538 (NELYLVEGDS…AGRVFIALPP (115 aa)) enclose the Toprim domain. Glu430, Asp503, and Asp505 together coordinate Mg(2+).

The protein belongs to the type II topoisomerase family. ParE type 2 subfamily. In terms of assembly, heterotetramer composed of ParC and ParE. It depends on Mg(2+) as a cofactor. Requires Mn(2+) as cofactor. The cofactor is Ca(2+).

The catalysed reaction is ATP-dependent breakage, passage and rejoining of double-stranded DNA.. In terms of biological role, topoisomerase IV is essential for chromosome segregation. It relaxes supercoiled DNA. Performs the decatenation events required during the replication of a circular DNA molecule. The chain is DNA topoisomerase 4 subunit B from Staphylococcus aureus (strain Mu50 / ATCC 700699).